Consider the following 222-residue polypeptide: Germin-like protein 11-1 (222 aa).

An N-terminal signal peptide occupies residues 1-23 (MKLSTVLCCYLLLLGLFAPEIIS). Cysteine 32 and cysteine 49 are oxidised to a cystine. The Cupin type-1 domain maps to 72–195 (DNMVRSSANI…AMFAPDSEVA (124 aa)). Histidine 111, histidine 113, glutamate 118, and histidine 157 together coordinate Mn(2+).

It belongs to the germin family. Oligomer (believed to be a pentamer but probably hexamer).

The protein localises to the secreted. It is found in the extracellular space. The protein resides in the apoplast. May play a role in plant defense. Probably has no oxalate oxidase activity even if the active site is conserved. This chain is Germin-like protein 11-1, found in Oryza sativa subsp. japonica (Rice).